Reading from the N-terminus, the 215-residue chain is Probable nicotinate-nucleotide adenylyltransferase (215 aa).

This sequence belongs to the NadD family.

It catalyses the reaction nicotinate beta-D-ribonucleotide + ATP + H(+) = deamido-NAD(+) + diphosphate. It functions in the pathway cofactor biosynthesis; NAD(+) biosynthesis; deamido-NAD(+) from nicotinate D-ribonucleotide: step 1/1. Its function is as follows. Catalyzes the reversible adenylation of nicotinate mononucleotide (NaMN) to nicotinic acid adenine dinucleotide (NaAD). The protein is Probable nicotinate-nucleotide adenylyltransferase of Gluconacetobacter diazotrophicus (strain ATCC 49037 / DSM 5601 / CCUG 37298 / CIP 103539 / LMG 7603 / PAl5).